A 270-amino-acid polypeptide reads, in one-letter code: Flavin-dependent thymidylate synthase (270 aa).

A ThyX domain is found at 13–218 (GFVRLVDQMG…PLAWAAFEEH (206 aa)). FAD is bound by residues serine 59, 82 to 84 (RHR), and glutamate 90. DUMP contacts are provided by residues 79 to 82 (QWFR), 90 to 94 (EISGR), and arginine 157. A ThyX motif motif is present at residues 82–92 (RHRTASVNEIS). Residues 173–175 (DLH) and histidine 179 each bind FAD. DUMP is bound at residue arginine 184. The Involved in ionization of N3 of dUMP, leading to its activation role is filled by arginine 184.

The protein belongs to the thymidylate synthase ThyX family. In terms of assembly, homotetramer. Requires FAD as cofactor.

It catalyses the reaction dUMP + (6R)-5,10-methylene-5,6,7,8-tetrahydrofolate + NADPH + H(+) = dTMP + (6S)-5,6,7,8-tetrahydrofolate + NADP(+). The protein operates within pyrimidine metabolism; dTTP biosynthesis. Its function is as follows. Catalyzes the reductive methylation of 2'-deoxyuridine-5'-monophosphate (dUMP) to 2'-deoxythymidine-5'-monophosphate (dTMP) while utilizing 5,10-methylenetetrahydrofolate (mTHF) as the methyl donor, and NADPH and FADH(2) as the reductant. The protein is Flavin-dependent thymidylate synthase of Thermus thermophilus (strain ATCC BAA-163 / DSM 7039 / HB27).